The chain runs to 324 residues: Glyoxylate/hydroxypyruvate reductase B (324 aa).

Residues Arg-237 and Glu-266 contribute to the active site. His-285 acts as the Proton donor in catalysis.

The protein belongs to the D-isomer specific 2-hydroxyacid dehydrogenase family. GhrB subfamily. Homodimer.

Its subcellular location is the cytoplasm. It catalyses the reaction glycolate + NADP(+) = glyoxylate + NADPH + H(+). It carries out the reaction (R)-glycerate + NAD(+) = 3-hydroxypyruvate + NADH + H(+). The enzyme catalyses (R)-glycerate + NADP(+) = 3-hydroxypyruvate + NADPH + H(+). Its function is as follows. Catalyzes the NADPH-dependent reduction of glyoxylate and hydroxypyruvate into glycolate and glycerate, respectively. This is Glyoxylate/hydroxypyruvate reductase B from Shigella boydii serotype 18 (strain CDC 3083-94 / BS512).